The primary structure comprises 266 residues: Phosphate import ATP-binding protein PstB (266 aa).

One can recognise an ABC transporter domain in the interval 15–261 (VQKSVVNKLN…PKNKQTEDYI (247 aa)). ATP is bound at residue 50–57 (GPSGCGKS).

Belongs to the ABC transporter superfamily. Phosphate importer (TC 3.A.1.7) family. In terms of assembly, the complex is composed of two ATP-binding proteins (PstB), two transmembrane proteins (PstC and PstA) and a solute-binding protein (PstS).

The protein localises to the cell inner membrane. The enzyme catalyses phosphate(out) + ATP + H2O = ADP + 2 phosphate(in) + H(+). Functionally, part of the ABC transporter complex PstSACB involved in phosphate import. Responsible for energy coupling to the transport system. The sequence is that of Phosphate import ATP-binding protein PstB from Nitrosomonas europaea (strain ATCC 19718 / CIP 103999 / KCTC 2705 / NBRC 14298).